We begin with the raw amino-acid sequence, 786 residues long: Probable aminopeptidase 1 (786 aa).

Residues E103 and 235 to 239 (GAMEN) each bind substrate. H270 provides a ligand contact to Zn(2+). The Proton acceptor role is filled by E271. The Zn(2+) site is built by H274 and E293.

This sequence belongs to the peptidase M1 family. It depends on Zn(2+) as a cofactor.

Its subcellular location is the cytoplasm. This is Probable aminopeptidase 1 (ape1) from Sulfurisphaera tokodaii (strain DSM 16993 / JCM 10545 / NBRC 100140 / 7) (Sulfolobus tokodaii).